The chain runs to 262 residues: Zinc finger protein 138 (262 aa).

Residues 110-132 form a C2H2-type 1 zinc finger; it reads FRCKECDKSLCMLSRLTQHKKIH. A C2H2-type 2; degenerate zinc finger spans residues 138-160; the sequence is YKCEECGKTFNWSTNLSKPKKIH. The C2H2-type 3; degenerate zinc-finger motif lies at 166-188; it reads YKCEVCGKAFHQSSILTKHKIIR. The segment at 194-216 adopts a C2H2-type 4 zinc-finger fold; it reads YKCAHCGKAFKQSSHLTRHKIIH. A C2H2-type 5; degenerate zinc finger spans residues 222-244; the sequence is YKCEQCGKVFKQSPTLTKHQIIY. The C2H2-type 6; degenerate zinc finger occupies 250–262; the sequence is YKCEECGKAFNLS.

Belongs to the krueppel C2H2-type zinc-finger protein family.

It localises to the nucleus. May be involved in transcriptional regulation as a repressor. This Homo sapiens (Human) protein is Zinc finger protein 138 (ZNF138).